A 311-amino-acid polypeptide reads, in one-letter code: Ribonuclease Z (311 aa).

Positions 63, 65, 67, 68, 141, 212, and 270 each coordinate Zn(2+). Residue D67 is the Proton acceptor of the active site.

This sequence belongs to the RNase Z family. Homodimer. The cofactor is Zn(2+).

The catalysed reaction is Endonucleolytic cleavage of RNA, removing extra 3' nucleotides from tRNA precursor, generating 3' termini of tRNAs. A 3'-hydroxy group is left at the tRNA terminus and a 5'-phosphoryl group is left at the trailer molecule.. In terms of biological role, zinc phosphodiesterase, which displays some tRNA 3'-processing endonuclease activity. Probably involved in tRNA maturation, by removing a 3'-trailer from precursor tRNA. This Lactiplantibacillus plantarum (strain ATCC BAA-793 / NCIMB 8826 / WCFS1) (Lactobacillus plantarum) protein is Ribonuclease Z.